A 191-amino-acid polypeptide reads, in one-letter code: Protein YceI (191 aa).

A signal peptide spans 1-22 (MKKNLLGFTFASLLFTTGSAVA).

The protein belongs to the UPF0312 family. Type 1 subfamily.

It localises to the periplasm. The sequence is that of Protein YceI from Salmonella agona (strain SL483).